Reading from the N-terminus, the 584-residue chain is ETHYLENE INSENSITIVE 3-like 1 protein (584 aa).

Residues 41–74 adopt a coiled-coil conformation; that stretch reads YTDDEMDVDELEKRMWRDKMRLKRLKEQQSKCKE. Over residues 67–80 the composition is skewed to basic and acidic residues; that stretch reads EQQSKCKEGVDGSK. Disordered regions lie at residues 67 to 93 and 565 to 584; these read EQQS…RKKM and EGMG…SIWF.

This sequence belongs to the EIN3 family. In terms of assembly, acts as a homodimer to bind the primary ethylene response element.

Its subcellular location is the nucleus. Its function is as follows. Probable transcription factor acting as a positive regulator in the ethylene response pathway. Could bind the primary ethylene response element present in the ETHYLENE-RESPONSE-FACTOR1 promoter. The polypeptide is ETHYLENE INSENSITIVE 3-like 1 protein (EIL1) (Arabidopsis thaliana (Mouse-ear cress)).